The primary structure comprises 229 residues: Large ribosomal subunit protein uL1 (229 aa).

The protein belongs to the universal ribosomal protein uL1 family. In terms of assembly, part of the 50S ribosomal subunit.

Binds directly to 23S rRNA. The L1 stalk is quite mobile in the ribosome, and is involved in E site tRNA release. Its function is as follows. Protein L1 is also a translational repressor protein, it controls the translation of the L11 operon by binding to its mRNA. The chain is Large ribosomal subunit protein uL1 from Streptococcus sanguinis (strain SK36).